The primary structure comprises 405 residues: 4-hydroxy-3-methylbut-2-en-1-yl diphosphate synthase (flavodoxin) (405 aa).

Cys297, Cys300, Cys343, and Glu350 together coordinate [4Fe-4S] cluster.

This sequence belongs to the IspG family. Requires [4Fe-4S] cluster as cofactor.

The enzyme catalyses (2E)-4-hydroxy-3-methylbut-2-enyl diphosphate + oxidized [flavodoxin] + H2O + 2 H(+) = 2-C-methyl-D-erythritol 2,4-cyclic diphosphate + reduced [flavodoxin]. It functions in the pathway isoprenoid biosynthesis; isopentenyl diphosphate biosynthesis via DXP pathway; isopentenyl diphosphate from 1-deoxy-D-xylulose 5-phosphate: step 5/6. Converts 2C-methyl-D-erythritol 2,4-cyclodiphosphate (ME-2,4cPP) into 1-hydroxy-2-methyl-2-(E)-butenyl 4-diphosphate. The polypeptide is 4-hydroxy-3-methylbut-2-en-1-yl diphosphate synthase (flavodoxin) (Francisella tularensis subsp. novicida (strain U112)).